Reading from the N-terminus, the 441-residue chain is GTPase Der (441 aa).

2 consecutive EngA-type G domains span residues 4–169 (PIVA…PEGS) and 178–353 (PKVA…DAQT). GTP-binding positions include 10-17 (GRPNVGKS), 57-61 (DTGGI), 120-123 (NKVD), 184-191 (GKPNVGKS), 231-235 (DTAGL), and 296-299 (NKWD). Positions 354-438 (MRIPTGVLNE…SIRFINRERK (85 aa)) constitute a KH-like domain.

This sequence belongs to the TRAFAC class TrmE-Era-EngA-EngB-Septin-like GTPase superfamily. EngA (Der) GTPase family. In terms of assembly, associates with the 50S ribosomal subunit.

Functionally, GTPase that plays an essential role in the late steps of ribosome biogenesis. The polypeptide is GTPase Der (Lachnospira eligens (strain ATCC 27750 / DSM 3376 / VPI C15-48 / C15-B4) (Eubacterium eligens)).